A 547-amino-acid polypeptide reads, in one-letter code: 4-coumarate-CoA ligase 1 (547 aa).

ATP is bound by residues 190–194, His238, 310–312, 332–333, Thr337, Asp421, Arg436, and Lys527; these read SSGTT, AAP, and QG. The tract at residues 263–332 is SBD1; sequence EIVRLMELVE…EKLPNAKLGQ (70 aa). Residues 333 to 400 are SBD2; the sequence is GYGMTEAGPV…IRGNQIMKGY (68 aa).

Belongs to the ATP-dependent AMP-binding enzyme family. In terms of tissue distribution, mostly expressed in stems, and, to a lower extent, in bulbs.

The enzyme catalyses (E)-4-coumarate + ATP + CoA = (E)-4-coumaroyl-CoA + AMP + diphosphate. It functions in the pathway phytoalexin biosynthesis; 3,4',5-trihydroxystilbene biosynthesis; 3,4',5-trihydroxystilbene from trans-4-coumarate: step 1/2. Produces CoA thioesters of a variety of hydroxy- and methoxy-substituted cinnamic acids, which are used to synthesize several phenylpropanoid-derived compounds, including anthocyanins, flavonoids, isoflavonoids, coumarins, lignin, suberin and wall-bound phenolics. This chain is 4-coumarate-CoA ligase 1, found in Narcissus pseudonarcissus (Daffodil).